Consider the following 253-residue polypeptide: Major prion protein (253 aa).

The N-terminal stretch at 1–22 is a signal peptide; that stretch reads MANLGCWMLVLFVATWSDLGLC. Positions 23–38 are interaction with ADGRG6; the sequence is KKRPKPGGWNTGGSRY. The segment at 23 to 230 is interaction with GRB2, ERI3 and SYN1; sequence KKRPKPGGWN…ESQAYYQRGS (208 aa). A disordered region spans residues 26-108; that stretch reads PKPGGWNTGG…WNKPSKPKTN (83 aa). 5 repeat units span residues 51–59, 60–67, 68–75, 76–83, and 84–91. The segment at 51–91 is 5 X 8 AA tandem repeats of P-H-G-G-G-W-G-Q; that stretch reads PQGGGGWGQPHGGGWGQPHGGGWGQPHGGGWGQPHGGGWGQ. Over residues 52 to 95 the composition is skewed to gly residues; that stretch reads QGGGGWGQPHGGGWGQPHGGGWGQPHGGGWGQPHGGGWGQGGGT. 12 residues coordinate Cu(2+): His61, Gly62, Gly63, His69, Gly70, Gly71, His77, Gly78, Gly79, His85, Gly86, and Gly87. Cys179 and Cys214 are disulfide-bonded. Residues Asn181 and Asn197 are each glycosylated (N-linked (GlcNAc...) asparagine). Ser230 carries GPI-anchor amidated serine lipidation. A propeptide spans 231-253 (removed in mature form); that stretch reads SMVLFSSPPVILLISFLIFLIVG.

It belongs to the prion family. Monomer and homodimer. Has a tendency to aggregate into amyloid fibrils containing a cross-beta spine, formed by a steric zipper of superposed beta-strands. Soluble oligomers may represent an intermediate stage on the path to fibril formation. Copper binding may promote oligomerization. Interacts with GRB2, APP, ERI3/PRNPIP and SYN1. Mislocalized cytosolically exposed PrP interacts with MGRN1; this interaction alters MGRN1 subcellular location and causes lysosomal enlargement. Interacts with KIAA1191. Interacts with ADGRG6. The glycosylation pattern (the amount of mono-, di- and non-glycosylated forms or glycoforms) seems to differ in normal and CJD prion.

The protein localises to the cell membrane. It is found in the golgi apparatus. In terms of biological role, its primary physiological function is unclear. May play a role in neuronal development and synaptic plasticity. May be required for neuronal myelin sheath maintenance. May promote myelin homeostasis through acting as an agonist for ADGRG6 receptor. May play a role in iron uptake and iron homeostasis. Soluble oligomers are toxic to cultured neuroblastoma cells and induce apoptosis (in vitro). Association with GPC1 (via its heparan sulfate chains) targets PRNP to lipid rafts. Also provides Cu(2+) or Zn(2+) for the ascorbate-mediated GPC1 deaminase degradation of its heparan sulfate side chains. The protein is Major prion protein (PRNP) of Homo sapiens (Human).